Reading from the N-terminus, the 696-residue chain is DNA ligase (696 aa).

NAD(+)-binding positions include 36-40 (DAVYD), 85-86 (SL), and Glu-124. Lys-126 serves as the catalytic N6-AMP-lysine intermediate. NAD(+)-binding residues include Arg-147, Glu-184, Lys-308, and Lys-332. Cys-426, Cys-429, Cys-444, and Cys-449 together coordinate Zn(2+). Residues 618–696 (QRTVSLQGQT…EEELLKLLAS (79 aa)) enclose the BRCT domain.

Belongs to the NAD-dependent DNA ligase family. LigA subfamily. It depends on Mg(2+) as a cofactor. Mn(2+) serves as cofactor.

The catalysed reaction is NAD(+) + (deoxyribonucleotide)n-3'-hydroxyl + 5'-phospho-(deoxyribonucleotide)m = (deoxyribonucleotide)n+m + AMP + beta-nicotinamide D-nucleotide.. In terms of biological role, DNA ligase that catalyzes the formation of phosphodiester linkages between 5'-phosphoryl and 3'-hydroxyl groups in double-stranded DNA using NAD as a coenzyme and as the energy source for the reaction. It is essential for DNA replication and repair of damaged DNA. This chain is DNA ligase, found in Prochlorococcus marinus (strain MIT 9303).